The following is a 202-amino-acid chain: Zinc metalloproteinase barnettlysin-1 (202 aa).

Residues 6 to 200 (RYVELFIVVD…MKENPQCILN (195 aa)) form the Peptidase M12B domain. 2 residues coordinate Ca(2+): Glu9 and Asp93. 3 cysteine pairs are disulfide-bonded: Cys117-Cys197, Cys157-Cys181, and Cys159-Cys164. His142 lines the Zn(2+) pocket. Residue Glu143 is part of the active site. Residues His146 and His152 each coordinate Zn(2+). Residues Cys197 and Asn200 each coordinate Ca(2+).

Monomer. The cofactor is Zn(2+). As to expression, expressed by the venom gland.

It is found in the secreted. Non-hemorrhagic metalloproteinase that hydrolyzes the alpha chains of fibrinogen and fibrin but has no activity on beta- and gamma-chains. Cleaves X-Leu bonds. Inhibits platelet aggregation induced by the von Willebrand factor (VWF) (IC(50) is 1.4 uM) and type I collagen (IC(50) is 3.2 uM). Acts by cleaving the vWF and its receptor GPIb, and by cleaving the collagen-binding Alpha-2A domain of the collagen receptor alpha-2/beta-1 integrin (ITGA2/ITGB1). Also degrades the extracellular matrix protein fibronectin (FN1), but has no effect on laminin and type I collagen. The sequence is that of Zinc metalloproteinase barnettlysin-1 from Bothrops barnetti (Barnett's lancehead).